The chain runs to 192 residues: Peroxiredoxin tpx1 (192 aa).

Residues 3 to 161 (LQIGKPAPDF…ALRLLDAFQF (159 aa)) form the Thioredoxin domain. Catalysis depends on Cys-48, which acts as the Cysteine sulfenic acid (-SOH) intermediate. Residues Ser-105 and Ser-148 each carry the phosphoserine modification.

This sequence belongs to the peroxiredoxin family. AhpC/Prx1 subfamily. Homodimer; disulfide-linked, upon oxidation. Interacts with srx1 in response to oxidative stress. Interacts with pap1 via transient disulfide linkages. Post-translationally, the enzyme can be inactivated by further oxidation of the cysteine sulfenic acid (C(P)-SOH) to sulphinic acid (C(P)-SO2H) instead of its condensation to a disulfide bond. It can be reactivated by forming a transient disulfide bond with sulfiredoxin srx1, which reduces the cysteine sulfinic acid in an ATP- and Mg-dependent manner.

It localises to the cytoplasm. The protein localises to the nucleus. It catalyses the reaction a hydroperoxide + [thioredoxin]-dithiol = an alcohol + [thioredoxin]-disulfide + H2O. Functionally, thiol-specific peroxidase that catalyzes the reduction of hydrogen peroxide and organic hydroperoxides to water and alcohols, respectively. Plays a role in cell protection against oxidative stress by detoxifying peroxides and as sensor of hydrogen peroxide-mediated signaling events. Relays hydrogen peroxide as a signal to the transcription factor pap1 by inducing the formation of intramolecular disulfide bonds in pap1, which causes its nuclear accumulation and activation. Reduced by srx1 and this regulation acts as a molecular switch controlling the transcriptional response to hydrogen peroxide. This chain is Peroxiredoxin tpx1 (tpx1), found in Schizosaccharomyces pombe (strain 972 / ATCC 24843) (Fission yeast).